A 409-amino-acid polypeptide reads, in one-letter code: Elongation factor Tu, cyanelle (409 aa).

The tr-type G domain occupies 10-214; the sequence is KPHVNIGTIG…AVDEYIPTPE (205 aa). Residues 19–26 are G1; it reads GHVDHGKT. 19-26 is a GTP binding site; the sequence is GHVDHGKT. Threonine 26 contributes to the Mg(2+) binding site. Residues 60 to 64 are G2; it reads GITIN. A G3 region spans residues 81 to 84; that stretch reads DCPG. Residues 81 to 85 and 136 to 139 each bind GTP; these read DCPGH and NKED. The tract at residues 136–139 is G4; it reads NKED. The interval 174–176 is G5; it reads SAL.

The protein belongs to the TRAFAC class translation factor GTPase superfamily. Classic translation factor GTPase family. EF-Tu/EF-1A subfamily.

Its subcellular location is the plastid. The protein localises to the cyanelle. It carries out the reaction GTP + H2O = GDP + phosphate + H(+). Functionally, GTP hydrolase that promotes the GTP-dependent binding of aminoacyl-tRNA to the A-site of ribosomes during protein biosynthesis. This Cyanophora paradoxa protein is Elongation factor Tu, cyanelle (tufA).